The following is a 152-amino-acid chain: MHFSKLSRRKKGKVPLPPLPTAPLPPHRPRMSGTWCPPVHNVPGLERNWYESCLRSHAAFCGCGDFVSHLNNLANRLGRPPAPRPPGAPQPPAVRALPALPAPEDRFPNPPGWPGPGGGAAGAGAAAGRDGGDGGDAEPGDEDLDALFAADE.

The span at 1 to 13 (MHFSKLSRRKKGK) shows a compositional bias: basic residues. Disordered stretches follow at residues 1–28 (MHFS…PPHR) and 75–152 (NRLG…AADE). 2 stretches are compositionally biased toward pro residues: residues 15-26 (PLPPLPTAPLPP) and 80-92 (PPAP…PQPP). Over residues 133 to 152 (DGGDAEPGDEDLDALFAADE) the composition is skewed to acidic residues.

This is an uncharacterized protein from Pan troglodytes (Chimpanzee).